We begin with the raw amino-acid sequence, 152 residues long: Regulatory protein RecX (152 aa).

This sequence belongs to the RecX family.

Its subcellular location is the cytoplasm. In terms of biological role, modulates RecA activity. This is Regulatory protein RecX from Haemophilus influenzae (strain PittEE).